The following is a 488-amino-acid chain: Protein kinase C and casein kinase substrate in neurons 2 protein (488 aa).

Residues 11 to 282 (VEVSSDSFWE…SIKAADAVED (272 aa)) enclose the F-BAR domain. Residues 25–274 (KRTVKRIDDG…GIYRELEQSI (250 aa)) adopt a coiled-coil conformation. N6-acetyllysine is present on Lys-53. The span at 163-176 (CKEEKLAVSREANS) shows a compositional bias: basic and acidic residues. The tract at residues 163–183 (CKEEKLAVSREANSKADPSLN) is disordered. Phosphoserine is present on Ser-273. At Ser-315 the chain carries Phosphoserine; by PKC. The interval 316–429 (RREKKKAADG…PFDEDTTSGT (114 aa)) is disordered. Residues 329-364 (TGINQTGDQSGQNKPSSNLSVPSNPAQSTQLQSSYN) show a composition bias toward polar residues. The NPF1 motif lies at 364–366 (NPF). At Ser-375 the chain carries Phosphoserine; by IKKB. The segment covering 386–396 (NVSSYEKTQNY) has biased composition (polar residues). Ser-401 bears the Phosphoserine mark. The segment covering 406–418 (NNPFSSTDANGDS) has biased composition (polar residues). The short motif at 407–409 (NPF) is the NPF2 element. The NPF3 motif lies at 419-421 (NPF). The SH3 domain occupies 428–488 (GTEVRVRALY…YPANYVEAIQ (61 aa)). Ser-448 is modified (phosphoserine).

The protein belongs to the PACSIN family. As to quaternary structure, homodimer. May form heterooligomers with other PACSINs. Interacts (via NPF motifs) with EHD1 (via EH domain). Interacts with EHD3. Interacts (via the SH3 domain) with MICALL1. Interacts with RAC1. Interacts (via SH3 domain) with DNM1, SYN1, SYNJ1 and WASL. Interacts with CAV1. Interacts with TRPV4. Forms a complex with EHD4 and MICALL1; the complex controls CDH5 trafficking and coordinates angiogenesis. Phosphorylated by casein kinase 2 (CK2) and protein kinase C (PKC). Phosphorylation by PKC probably decreases the membrane binding and tubulation capacities of PACSIN2, thereby modulating the lifetime of caveolae. In terms of tissue distribution, widely expressed (at protein level). Isoforms 1/3 are predominantly expressed in heart and in PC-12 cells, a pheochromocytoma cell line (at protein level). Isoforms 2/4 are widely expressed with highest levels in muscle, testis and brain (at protein level).

The protein localises to the cytoplasm. The protein resides in the cytoskeleton. Its subcellular location is the cytoplasmic vesicle membrane. It localises to the cell projection. It is found in the ruffle membrane. The protein localises to the early endosome. The protein resides in the recycling endosome membrane. Its subcellular location is the cell membrane. It localises to the membrane. It is found in the caveola. The protein localises to the cell junction. The protein resides in the adherens junction. In terms of biological role, regulates the morphogenesis and endocytosis of caveolae. Lipid-binding protein that is able to promote the tubulation of the phosphatidic acid-containing membranes it preferentially binds. Plays a role in intracellular vesicle-mediated transport. Involved in the endocytosis of cell-surface receptors like the EGF receptor, contributing to its internalization in the absence of EGF stimulus. Facilitates endothelial front-rear polarity during migration by recruiting EHD4 and MICALL1 to asymmetric adherens junctions between leader and follower cells. The polypeptide is Protein kinase C and casein kinase substrate in neurons 2 protein (Pacsin2) (Rattus norvegicus (Rat)).